Here is a 156-residue protein sequence, read N- to C-terminus: Small ribosomal subunit protein uS7 (156 aa).

Belongs to the universal ribosomal protein uS7 family. Part of the 30S ribosomal subunit. Contacts proteins S9 and S11.

Functionally, one of the primary rRNA binding proteins, it binds directly to 16S rRNA where it nucleates assembly of the head domain of the 30S subunit. Is located at the subunit interface close to the decoding center, probably blocks exit of the E-site tRNA. The protein is Small ribosomal subunit protein uS7 of Mesorhizobium japonicum (strain LMG 29417 / CECT 9101 / MAFF 303099) (Mesorhizobium loti (strain MAFF 303099)).